The primary structure comprises 319 residues: Pyrroline-5-carboxylate reductase 1, mitochondrial (319 aa).

Ser-2 carries the post-translational modification N-acetylserine. NADP(+)-binding positions include 6–11 (IGAGQL) and Ser-34. Residues Ala-8, Gln-10, Leu-11, Ser-34, Asp-36, Asn-56, Val-70, Lys-71, and Ala-97 each contribute to the NADPH site. NADP(+)-binding positions include Asn-56, 69–72 (AVKP), and 95–97 (CAA). Glu-164 serves as a coordination point for L-proline. Asn-230 contacts NADPH. Ala-237 and Thr-238 together coordinate L-proline. Phosphoserine is present on residues Ser-278 and Ser-301. The disordered stretch occupies residues 294–319 (SPAGTALSPSGHTKLLPRSLAPAGKD).

The protein belongs to the pyrroline-5-carboxylate reductase family. As to quaternary structure, homodecamer; composed of 5 homodimers. Interacts with LTO1.

Its subcellular location is the mitochondrion. It catalyses the reaction L-proline + NADP(+) = (S)-1-pyrroline-5-carboxylate + NADPH + 2 H(+). The enzyme catalyses L-proline + NAD(+) = (S)-1-pyrroline-5-carboxylate + NADH + 2 H(+). Its pathway is amino-acid biosynthesis; L-proline biosynthesis; L-proline from L-glutamate 5-semialdehyde: step 1/1. With respect to regulation, subject to competitive inhibition by the reaction product proline. Subject to competitive inhibition by stearoyl coenzyme A. In terms of biological role, oxidoreductase that catalyzes the last step in proline biosynthesis, which corresponds to the reduction of pyrroline-5-carboxylate to L-proline using NAD(P)H. At physiologic concentrations, has higher specific activity in the presence of NADH. Involved in the cellular response to oxidative stress. This Homo sapiens (Human) protein is Pyrroline-5-carboxylate reductase 1, mitochondrial.